A 975-amino-acid chain; its full sequence is FHF complex subunit HOOK-interacting protein 1B (975 aa).

The interval 465–496 is disordered; sequence APSPPRPEHASWARGPGSPSVDSSSVVTVPRP. Ser-467 is subject to Phosphoserine. Residues 482–496 are compositionally biased toward low complexity; the sequence is SPSVDSSSVVTVPRP. A phosphoserine mark is found at Ser-510, Ser-523, Ser-529, and Ser-533. 3 disordered regions span residues 511–548, 573–621, and 690–717; these read LGGS…GELE, SAPY…GLAV, and SNGG…SFTC. Residues 527 to 538 show a composition bias toward low complexity; it reads TASPTSSPSRRP. The span at 597-608 shows a compositional bias: basic and acidic residues; it reads LLPEEDRDNVRE. Ser-863 carries the post-translational modification Phosphoserine. A Phosphothreonine modification is found at Thr-892. Ser-900 carries the post-translational modification Phosphoserine.

This sequence belongs to the FHIP family. In terms of assembly, component of the FTS/Hook/FHIP complex (FHF complex), composed of AKTIP/FTS, FHIP1B, and one or more members of the Hook family of proteins HOOK1, HOOK2, and HOOK3. The FHF complex associates with the homotypic vesicular sorting complex (the HOPS complex).

Its function is as follows. Component of the FTS/Hook/FHIP complex (FHF complex). The FHF complex may function to promote vesicle trafficking and/or fusion via the homotypic vesicular protein sorting complex (the HOPS complex). FHF complex promotes the distribution of AP-4 complex to the perinuclear area of the cell. The sequence is that of FHF complex subunit HOOK-interacting protein 1B from Mus musculus (Mouse).